The sequence spans 346 residues: Protein Spea_1705 (346 aa).

The active-site Proton acceptor is cysteine 101. Substrate contacts are provided by residues 102–103, aspartate 262, and 267–268; these read GH and GT.

The protein belongs to the proline racemase family.

The enzyme catalyses trans-3-hydroxy-L-proline = 1-pyrroline-2-carboxylate + H2O. In terms of biological role, in vitro, catalyzes the dehydration of trans-3-hydroxy-L-proline (t3LHyp) to Delta(1)-pyrroline-2-carboxylate (Pyr2C), albeit with very low efficiency. The physiological substrate may be different. Displays neither trans-4-hydroxy-L-proline (t4LHyp) epimerase nor proline racemase activity. The chain is Protein Spea_1705 from Shewanella pealeana (strain ATCC 700345 / ANG-SQ1).